We begin with the raw amino-acid sequence, 348 residues long: Endoplasmic reticulum junction formation protein lunapark-A (348 aa).

Residues 1–43 (MSVFCLQAKPTTVEILEGIDKDIQILEDYSVKYQRQMKAVVGR) lie on the Cytoplasmic side of the membrane. Residues 44 to 64 (LLLYSILLYLMAGVVVYSWYL) traverse the membrane as a helical segment. Residues 65 to 67 (PEQ) are Lumenal-facing. A helical membrane pass occupies residues 68-88 (LMGRLVLGLPFLLFPLLVWIL). The Cytoplasmic segment spans residues 89–348 (RKVLILFFAR…EEDKQSDSGD (260 aa)). A coiled-coil region spans residues 105-126 (FKLEDLKAQKRKILEDVMETET). The segment at 142–211 (KKKTDFDSTP…HSAPGGPPER (70 aa)) is disordered. The segment at 277 to 302 (CQQCLSHNGMALKEEFEYVAFRCAYC) adopts a C4-type; plays a role in ER morphology zinc-finger fold. Residues 313-348 (PQAPRLPETAGEPKLPCDLNSSSCAAEEDKQSDSGD) form a disordered region. The segment covering 339-348 (EEDKQSDSGD) has biased composition (basic and acidic residues).

Belongs to the lunapark family. In terms of assembly, homodimer; homodimerization requires the C4-type zinc finger motif and decreases during mitosis in a phosphorylation-dependent manner. Phosphorylated. Phosphorylation occurs during interphase. Phosphorylation also occurs during mitosis; these phosphorylations reduce both its homodimerization and the ER three-way tubular junction formation.

The protein resides in the endoplasmic reticulum membrane. Functionally, endoplasmic reticulum (ER)-shaping membrane protein that plays a role in determining ER morphology. Involved in the stabilization of nascent three-way ER tubular junctions within the ER network. May also play a role as a curvature-stabilizing protein within three-way ER tubular junction network. This chain is Endoplasmic reticulum junction formation protein lunapark-A (lnpka), found in Takifugu rubripes (Japanese pufferfish).